We begin with the raw amino-acid sequence, 313 residues long: Beta-ketoacyl-[acyl-carrier-protein] synthase III (313 aa).

Residues cysteine 112 and histidine 238 contribute to the active site. Positions glutamine 239–arginine 243 are ACP-binding. The active site involves asparagine 268.

It belongs to the thiolase-like superfamily. FabH family. Homodimer.

It localises to the cytoplasm. It catalyses the reaction malonyl-[ACP] + acetyl-CoA + H(+) = 3-oxobutanoyl-[ACP] + CO2 + CoA. Its pathway is lipid metabolism; fatty acid biosynthesis. Functionally, catalyzes the condensation reaction of fatty acid synthesis by the addition to an acyl acceptor of two carbons from malonyl-ACP. Catalyzes the first condensation reaction which initiates fatty acid synthesis and may therefore play a role in governing the total rate of fatty acid production. Possesses both acetoacetyl-ACP synthase and acetyl transacylase activities. Its substrate specificity determines the biosynthesis of branched-chain and/or straight-chain of fatty acids. The sequence is that of Beta-ketoacyl-[acyl-carrier-protein] synthase III from Staphylococcus haemolyticus (strain JCSC1435).